A 323-amino-acid chain; its full sequence is Annexin A3 (323 aa).

Ala2 is subject to N-acetylalanine. 4 Annexin repeats span residues 18-89, 90-161, 173-245, and 249-320; these read FSPS…ALVT, PPAV…TLAD, HLAK…AIVN, and NTPA…KICG. Phosphothreonine is present on Thr267.

It belongs to the annexin family.

Inhibitor of phospholipase A2, also possesses anti-coagulant properties. Also cleaves the cyclic bond of inositol 1,2-cyclic phosphate to form inositol 1-phosphate. In Homo sapiens (Human), this protein is Annexin A3 (ANXA3).